A 21-amino-acid polypeptide reads, in one-letter code: VTVYENEGTKVDFDGNLRLLL.

In terms of assembly, disulfide bond interactions within and between MOMP molecules and other components form high molecular-weight oligomers.

The protein localises to the cell outer membrane. Its function is as follows. Structural rigidity of the outer membrane of elementary bodies and porin forming, permitting diffusion of solutes through the intracellular reticulate body membrane. Binds carcinoembryonic antigen (CEA). This chain is Outer membrane protein P2, found in Glaesserella parasuis (Haemophilus parasuis).